A 447-amino-acid chain; its full sequence is Elongation factor 1-alpha (447 aa).

Residues 5–230 (KFHINIVVIG…DQINDAKRPS (226 aa)) form the tr-type G domain. A G1 region spans residues 14-21 (GHVDSGKS). 14 to 21 (GHVDSGKS) is a binding site for GTP. At K55 the chain carries N6,N6-dimethyllysine. Residues 70–74 (GITID) form a G2 region. Residue K79 is modified to N6,N6,N6-trimethyllysine. Residues 91–94 (DAPG) are G3. GTP contacts are provided by residues 91–95 (DAPGH) and 153–156 (NKMD). Residues 153–156 (NKMD) form a G4 region. An N6,N6,N6-trimethyllysine modification is found at K187. Positions 194 to 196 (SGF) are G5. N6-methyllysine is present on K261. E289 carries the post-translational modification 5-glutamyl glycerylphosphorylethanolamine. Position 306 is an N6,N6,N6-trimethyllysine (K306). Position 362 is a 5-glutamyl glycerylphosphorylethanolamine (E362). K396 carries the N6,N6,N6-trimethyllysine modification.

This sequence belongs to the TRAFAC class translation factor GTPase superfamily. Classic translation factor GTPase family. EF-Tu/EF-1A subfamily. As to expression, was detected in all tissues examined but was most abundant in roots and salt-adapted cultured cells.

It is found in the cytoplasm. In terms of biological role, this protein promotes the GTP-dependent binding of aminoacyl-tRNA to the A-site of ribosomes during protein biosynthesis. This chain is Elongation factor 1-alpha, found in Nicotiana tabacum (Common tobacco).